Reading from the N-terminus, the 725-residue chain is Catalase-peroxidase (725 aa).

Positions 1 to 20 are disordered; that stretch reads MSSEAKCPFPHAANRSRSNQ. The segment at residues 91-215 is a cross-link (tryptophyl-tyrosyl-methioninium (Trp-Tyr) (with M-241)); that stretch reads WHATGTYRTM…LSATHMGLIY (125 aa). The active-site Proton acceptor is His92. Residues 215–241 constitute a cross-link (tryptophyl-tyrosyl-methioninium (Tyr-Met) (with W-91)); sequence YVNPEGPDGSGDYMAAAKDIRATFYRM. Residue His256 participates in heme b binding.

The protein belongs to the peroxidase family. Peroxidase/catalase subfamily. Homodimer or homotetramer. Heme b serves as cofactor. Post-translationally, formation of the three residue Trp-Tyr-Met cross-link is important for the catalase, but not the peroxidase activity of the enzyme.

It catalyses the reaction H2O2 + AH2 = A + 2 H2O. It carries out the reaction 2 H2O2 = O2 + 2 H2O. Bifunctional enzyme with both catalase and broad-spectrum peroxidase activity. The sequence is that of Catalase-peroxidase from Janthinobacterium sp. (strain Marseille) (Minibacterium massiliensis).